The following is a 311-amino-acid chain: Replication initiation protein (311 aa).

This sequence belongs to the plasmid replication initiation factor family.

Functionally, this protein is probably a specific topoisomerase involved in initiating replication. This protein is specifically required and may be rate-limiting for replication of the plasmid in vivo. In Staphylococcus aureus, this protein is Replication initiation protein (repD).